A 312-amino-acid polypeptide reads, in one-letter code: 4-diphosphocytidyl-2-C-methyl-D-erythritol kinase (312 aa).

Residue Lys-16 is part of the active site. Position 101 to 111 (101 to 111 (PIGAGLAGGSS)) interacts with ATP. Asp-143 is an active-site residue.

It belongs to the GHMP kinase family. IspE subfamily.

The enzyme catalyses 4-CDP-2-C-methyl-D-erythritol + ATP = 4-CDP-2-C-methyl-D-erythritol 2-phosphate + ADP + H(+). It functions in the pathway isoprenoid biosynthesis; isopentenyl diphosphate biosynthesis via DXP pathway; isopentenyl diphosphate from 1-deoxy-D-xylulose 5-phosphate: step 3/6. In terms of biological role, catalyzes the phosphorylation of the position 2 hydroxy group of 4-diphosphocytidyl-2C-methyl-D-erythritol. The protein is 4-diphosphocytidyl-2-C-methyl-D-erythritol kinase of Prochlorococcus marinus subsp. pastoris (strain CCMP1986 / NIES-2087 / MED4).